The chain runs to 312 residues: Olfactory receptor 2M5 (312 aa).

Residues 1-25 are Extracellular-facing; that stretch reads MAWENQTFNSDFILLGIFNHSPTHT. Residue asparagine 5 is glycosylated (N-linked (GlcNAc...) asparagine). A helical transmembrane segment spans residues 26–49; sequence FLFFLVLAIFSVAFMGNSVMVLLI. Residues 50-57 are Cytoplasmic-facing; it reads YLDTQLHT. A helical transmembrane segment spans residues 58 to 79; sequence PMYFLLSQLFLMDLMLICSTVP. The Extracellular portion of the chain corresponds to 80 to 100; that stretch reads KMAFNYLSGSKSISMAGCATQ. The cysteines at positions 97 and 189 are disulfide-linked. A helical membrane pass occupies residues 101 to 120; sequence IFFYVSLLGSECFLLAVMSY. Over 121–139 the chain is Cytoplasmic; it reads DRYIAICHPLRYTNLMRPK. Residues 140–158 form a helical membrane-spanning segment; sequence ICGLMTAFSWILGSMDAII. Residues 159–195 are Extracellular-facing; it reads DAVATFSFSYCGSREIAHFFCDFPSLLILSCNDTSIF. The helical transmembrane segment at 196-219 threads the bilayer; the sequence is EKVLFICCIVMIVFPVAIIIASYA. Topologically, residues 220-236 are cytoplasmic; the sequence is RVILAVIHMGSGEGRRK. The helical transmembrane segment at 237 to 259 threads the bilayer; that stretch reads AFTTCSSHLMVVGMYYGAGLFMY. Over 260–272 the chain is Extracellular; that stretch reads IRPTSDRSPMQDK. A helical transmembrane segment spans residues 273 to 292; it reads LVSVFYTILTPMLNPLIYSL. The Cytoplasmic segment spans residues 293–311; the sequence is RNKEVTRALRKVLGKGKCG.

It belongs to the G-protein coupled receptor 1 family.

It localises to the cell membrane. Functionally, odorant receptor. This is Olfactory receptor 2M5 (OR2M5) from Homo sapiens (Human).